Reading from the N-terminus, the 89-residue chain is Large ribosomal subunit protein eL43 (89 aa).

Cysteine 38, cysteine 41, cysteine 56, and cysteine 59 together coordinate Zn(2+). A C4-type zinc finger spans residues 38–59 (CPSCDRPGVKRESRGIWKCRKC).

The protein belongs to the eukaryotic ribosomal protein eL43 family. Putative zinc-binding subfamily. Part of the 50S ribosomal subunit. It depends on Zn(2+) as a cofactor.

In terms of biological role, binds to the 23S rRNA. The polypeptide is Large ribosomal subunit protein eL43 (Methanothermobacter thermautotrophicus (strain ATCC 29096 / DSM 1053 / JCM 10044 / NBRC 100330 / Delta H) (Methanobacterium thermoautotrophicum)).